The primary structure comprises 22 residues: Magnificalysin II (22 aa).

The segment at A3–A12 is plays an important role in the hemolytic activity. An N-terminal region region spans residues G11–V22.

Belongs to the actinoporin family. Sea anemone subfamily. Octamer or nonamer in membranes. Monomer in the soluble state.

It localises to the secreted. Its subcellular location is the nematocyst. The protein localises to the target cell membrane. Its function is as follows. Pore-forming protein that forms cations-selective hydrophilic pores of around 1 nm and causes cytolysis. Pore formation is a multi-step process that involves specific recognition of membrane sphingomyelin (but neither cholesterol nor phosphatidylcholine) using aromatic rich region and adjacent phosphocholine (POC) binding site, firm binding to the membrane (mainly driven by hydrophobic interactions) accompanied by the transfer of the N-terminal region to the lipid-water interface and finally pore formation after oligomerization of monomers. The sequence is that of Magnificalysin II from Heteractis magnifica (Magnificent sea anemone).